Consider the following 620-residue polypeptide: MAU2 chromatid cohesion factor homolog (620 aa).

TPR repeat units follow at residues 90–123, 445–478, and 485–518; these read FDTASLLAQLYQQQEQSSLAKPVLRKAIELSQHN, GSFYYVQGLNAFHKSSFHEAKRFLRETLKMANAE, and SCSLVLLSHVFLSIGNSKESMNMVTPAMQLASKI.

Belongs to the SCC4/mau-2 family. Component of the cohesin loading complex.

It localises to the nucleus. The protein resides in the nucleoplasm. In terms of biological role, required for association of the cohesin complex with chromatin during interphase. Plays a role in sister chromatid cohesion and normal progression through prometaphase. In Aedes aegypti (Yellowfever mosquito), this protein is MAU2 chromatid cohesion factor homolog.